A 427-amino-acid chain; its full sequence is Trigger factor (427 aa).

The PPIase FKBP-type domain maps to 163-248; the sequence is GNIAIIDFKG…VKGIKAKELP (86 aa).

Belongs to the FKBP-type PPIase family. Tig subfamily.

The protein resides in the cytoplasm. It catalyses the reaction [protein]-peptidylproline (omega=180) = [protein]-peptidylproline (omega=0). Involved in protein export. Acts as a chaperone by maintaining the newly synthesized protein in an open conformation. Functions as a peptidyl-prolyl cis-trans isomerase. This chain is Trigger factor, found in Clostridium botulinum (strain Eklund 17B / Type B).